A 264-amino-acid chain; its full sequence is Major prion protein (264 aa).

Positions 1 to 24 (MVKRHIGSWILVLFVVMWSDVGLC) are cleaved as a signal peptide. The interaction with GRB2, ERI3 and SYN1 stretch occupies residues 25-241 (KKRPKPGGGW…ESQAYYQRGA (217 aa)). The segment at 27–119 (RPKPGGGWNT…WNKPSKPKTN (93 aa)) is disordered. 6 consecutive repeat copies span residues 54–62 (SQGGGGWGQ), 63–70 (PHGGGWGQ), 71–78 (PHGGGWGQ), 79–86 (PHGGGWGQ), 87–94 (PHGGGWGQ), and 95–103 (PHGGGGWGQ). The interval 54–103 (SQGGGGWGQPHGGGWGQPHGGGWGQPHGGGWGQPHGGGWGQPHGGGGWGQ) is 6 X 8 AA tandem repeats of P-H-G-G-G-W-G-Q. Residues 55 to 105 (QGGGGWGQPHGGGWGQPHGGGWGQPHGGGWGQPHGGGWGQPHGGGGWGQGG) are compositionally biased toward gly residues. The Cu(2+) site is built by His72, Gly73, Gly74, His80, Gly81, Gly82, His88, Gly89, Gly90, His96, Gly98, and Gly99. Cys190 and Cys225 are oxidised to a cystine. N-linked (GlcNAc...) asparagine glycans are attached at residues Asn192 and Asn208. A lipid anchor (GPI-anchor amidated alanine) is attached at Ala241. Residues 242 to 264 (SVILFSSPPVILLISLLIFLIVG) constitute a propeptide, removed in mature form.

It belongs to the prion family. In terms of assembly, monomer and homodimer. Has a tendency to aggregate into amyloid fibrils containing a cross-beta spine, formed by a steric zipper of superposed beta-strands. Soluble oligomers may represent an intermediate stage on the path to fibril formation. Copper binding may promote oligomerization. Interacts with GRB2, APP, ERI3/PRNPIP and SYN1. Mislocalized cytosolically exposed PrP interacts with MGRN1; this interaction alters MGRN1 subcellular location and causes lysosomal enlargement. Interacts with KIAA1191.

It is found in the cell membrane. It localises to the golgi apparatus. Its primary physiological function is unclear. Has cytoprotective activity against internal or environmental stresses. May play a role in neuronal development and synaptic plasticity. May be required for neuronal myelin sheath maintenance. May play a role in iron uptake and iron homeostasis. Soluble oligomers are toxic to cultured neuroblastoma cells and induce apoptosis (in vitro). Association with GPC1 (via its heparan sulfate chains) targets PRNP to lipid rafts. Also provides Cu(2+) or Zn(2+) for the ascorbate-mediated GPC1 deaminase degradation of its heparan sulfate side chains. This is Major prion protein (PRNP) from Bubalus bubalis (Domestic water buffalo).